The following is a 399-amino-acid chain: Serine palmitoyltransferase (399 aa).

Pyridoxal 5'-phosphate-binding positions include 113 to 114, histidine 213, threonine 241, and serine 243; that span reads GF. Position 244 is an N6-(pyridoxal phosphate)lysine (lysine 244).

The protein belongs to the class-II pyridoxal-phosphate-dependent aminotransferase family. In terms of assembly, homodimer. Requires pyridoxal 5'-phosphate as cofactor.

The protein localises to the cytoplasm. The protein resides in the cell inner membrane. The enzyme catalyses L-serine + hexadecanoyl-CoA + H(+) = 3-oxosphinganine + CO2 + CoA. Its pathway is lipid metabolism; sphingolipid metabolism. Catalyzes the condensation of L-serine with palmitoyl-CoA (hexadecanoyl-CoA) to produce 3-oxosphinganine. Exhibits a broad substrate specificity concerning the chain length and the degree of unsaturation of acyl-CoA. This Sphingobacterium multivorum protein is Serine palmitoyltransferase.